A 418-amino-acid polypeptide reads, in one-letter code: Putative competence-damage inducible protein (418 aa).

Belongs to the CinA family.

The polypeptide is Putative competence-damage inducible protein (Streptococcus pneumoniae (strain CGSP14)).